A 335-amino-acid chain; its full sequence is Holliday junction branch migration complex subunit RuvB (335 aa).

Positions 1–181 (MSERVISPEP…FGLLIRLNLY (181 aa)) are large ATPase domain (RuvB-L). ATP contacts are provided by residues L20, R21, G62, K65, T66, T67, 128–130 (EDF), R171, Y181, and R218. Mg(2+) is bound at residue T66. A small ATPAse domain (RuvB-S) region spans residues 182–252 (SPEDLEKIVT…IAGAGLALLQ (71 aa)). The tract at residues 255–335 (ELGLDDIDRR…KLNHSQKTLF (81 aa)) is head domain (RuvB-H). R310 and R315 together coordinate DNA.

Belongs to the RuvB family. Homohexamer. Forms an RuvA(8)-RuvB(12)-Holliday junction (HJ) complex. HJ DNA is sandwiched between 2 RuvA tetramers; dsDNA enters through RuvA and exits via RuvB. An RuvB hexamer assembles on each DNA strand where it exits the tetramer. Each RuvB hexamer is contacted by two RuvA subunits (via domain III) on 2 adjacent RuvB subunits; this complex drives branch migration. In the full resolvosome a probable DNA-RuvA(4)-RuvB(12)-RuvC(2) complex forms which resolves the HJ.

It is found in the cytoplasm. It carries out the reaction ATP + H2O = ADP + phosphate + H(+). Its function is as follows. The RuvA-RuvB-RuvC complex processes Holliday junction (HJ) DNA during genetic recombination and DNA repair, while the RuvA-RuvB complex plays an important role in the rescue of blocked DNA replication forks via replication fork reversal (RFR). RuvA specifically binds to HJ cruciform DNA, conferring on it an open structure. The RuvB hexamer acts as an ATP-dependent pump, pulling dsDNA into and through the RuvAB complex. RuvB forms 2 homohexamers on either side of HJ DNA bound by 1 or 2 RuvA tetramers; 4 subunits per hexamer contact DNA at a time. Coordinated motions by a converter formed by DNA-disengaged RuvB subunits stimulates ATP hydrolysis and nucleotide exchange. Immobilization of the converter enables RuvB to convert the ATP-contained energy into a lever motion, pulling 2 nucleotides of DNA out of the RuvA tetramer per ATP hydrolyzed, thus driving DNA branch migration. The RuvB motors rotate together with the DNA substrate, which together with the progressing nucleotide cycle form the mechanistic basis for DNA recombination by continuous HJ branch migration. Branch migration allows RuvC to scan DNA until it finds its consensus sequence, where it cleaves and resolves cruciform DNA. This is Holliday junction branch migration complex subunit RuvB from Methanoregula boonei (strain DSM 21154 / JCM 14090 / 6A8).